Here is a 307-residue protein sequence, read N- to C-terminus: Protein TIPIN homolog (307 aa).

2 disordered regions span residues 1 to 50 (MASL…SQDA) and 252 to 279 (ASMD…LSNE). A compositionally biased stretch (pro residues) spans 262-271 (PLPPSQPPTP).

It belongs to the CSM3 family.

The protein resides in the cytoplasm. It localises to the nucleus. Required for normal progression of S-phase. Important for cell survival after DNA damage or replication stress. The chain is Protein TIPIN homolog from Drosophila melanogaster (Fruit fly).